The primary structure comprises 250 residues: Galectin-3 (250 aa).

The disordered stretch occupies residues 1–60 (MADNFSLHDALSGSGNPNPQGWPGAWGNQPAGAGGYPGASYPGAYPGQAPPGAYPGQAPP). A2 carries the N-acetylalanine modification. Residues S6 and S12 each carry the phosphoserine modification. 3 repeat units span residues 36–44 (YPGASYPGA), 45–53 (YPGQAPPGA), and 54–62 (YPGQAPPGA). Positions 36 to 109 (YPGASYPGAY…AYPATGPYGA (74 aa)) are 8 X 9 AA tandem repeats of Y-P-G-X(3)-P-G-A. The span at 38–47 (GASYPGAYPG) shows a compositional bias: low complexity. Positions 48 to 60 (QAPPGAYPGQAPP) are enriched in pro residues. The 4; approximate repeat unit spans residues 63 to 69 (YPGAPGA). Residues 70–78 (YPGAPAPGV) form repeat 5. One copy of the 6; approximate repeat lies at 79–88 (YPGPPSGPGA). The stretch at 89–100 (YPSSGQPSATGA) is one 7; approximate repeat. The stretch at 101 to 109 (YPATGPYGA) is one 8; approximate repeat. The 131-residue stretch at 118 to 248 (YNLPLPGGVV…DIDLTSASYT (131 aa)) folds into the Galectin domain. 181 to 187 (WGREERQ) contacts a beta-D-galactoside. Position 188 is a phosphoserine (S188). A Nuclear export signal motif is present at residues 226–241 (KKLNEISKLGISGDID).

Probably forms homo- or heterodimers. Interacts with DMBT1. Interacts with CD6 and ALCAM. Forms a complex with the ITGA3, ITGB1 and CSPG4. Interacts with LGALS3BP, LYPD3, ZFTRAF1 and UACA. Interacts with TRIM16; this interaction mediates autophagy of damage endomembranes. Interacts with cargo receptor TMED10; the interaction mediates the translocation from the cytoplasm into the ERGIC (endoplasmic reticulum-Golgi intermediate compartment) and thereby secretion. As to expression, a major expression is found in the colonic epithelium. It is also abundant in the activated macrophages. Expressed in fetal membranes.

It is found in the cytoplasm. The protein localises to the nucleus. The protein resides in the secreted. Functionally, galactose-specific lectin which binds IgE. May mediate with the alpha-3, beta-1 integrin the stimulation by CSPG4 of endothelial cells migration. Together with DMBT1, required for terminal differentiation of columnar epithelial cells during early embryogenesis. In the nucleus: acts as a pre-mRNA splicing factor. Involved in acute inflammatory responses including neutrophil activation and adhesion, chemoattraction of monocytes macrophages, opsonization of apoptotic neutrophils, and activation of mast cells. Together with TRIM16, coordinates the recognition of membrane damage with mobilization of the core autophagy regulators ATG16L1 and BECN1 in response to damaged endomembranes. This is Galectin-3 from Homo sapiens (Human).